We begin with the raw amino-acid sequence, 600 residues long: Dihydroxy-acid dehydratase (600 aa).

Asp-82 is a Mg(2+) binding site. Cys-123 contributes to the [2Fe-2S] cluster binding site. Mg(2+) is bound by residues Asp-124 and Lys-125. Lys-125 is subject to N6-carboxylysine. Cys-192 lines the [2Fe-2S] cluster pocket. Mg(2+) is bound at residue Glu-489. The active-site Proton acceptor is Ser-515.

It belongs to the IlvD/Edd family. As to quaternary structure, homodimer. [2Fe-2S] cluster is required as a cofactor. Requires Mg(2+) as cofactor.

It catalyses the reaction (2R)-2,3-dihydroxy-3-methylbutanoate = 3-methyl-2-oxobutanoate + H2O. It carries out the reaction (2R,3R)-2,3-dihydroxy-3-methylpentanoate = (S)-3-methyl-2-oxopentanoate + H2O. The protein operates within amino-acid biosynthesis; L-isoleucine biosynthesis; L-isoleucine from 2-oxobutanoate: step 3/4. It participates in amino-acid biosynthesis; L-valine biosynthesis; L-valine from pyruvate: step 3/4. Functionally, functions in the biosynthesis of branched-chain amino acids. Catalyzes the dehydration of (2R,3R)-2,3-dihydroxy-3-methylpentanoate (2,3-dihydroxy-3-methylvalerate) into 2-oxo-3-methylpentanoate (2-oxo-3-methylvalerate) and of (2R)-2,3-dihydroxy-3-methylbutanoate (2,3-dihydroxyisovalerate) into 2-oxo-3-methylbutanoate (2-oxoisovalerate), the penultimate precursor to L-isoleucine and L-valine, respectively. The sequence is that of Dihydroxy-acid dehydratase from Phocaeicola vulgatus (strain ATCC 8482 / DSM 1447 / JCM 5826 / CCUG 4940 / NBRC 14291 / NCTC 11154) (Bacteroides vulgatus).